Reading from the N-terminus, the 603-residue chain is MAMFTTMTALTLTSLIPPITATLINPNKKNSYPHYVKTAIASAFTISLIPTTMFICLGQETIVTNWCWTTTQTLQLSLSFKLDYFSMTFLPVALLITWSIMEFSLWYMASDPNINQFLKFLLIFLITMIILVTANNLLQLFIGWEGVGIMSFLLISWWYARTDANTAAIQAILYNRIGDIGFILALAWFLLHSNSWELQQVFLLNNNPNLLPLLGLLLAAAGKSAQLGLHPWLPSAMEGPTPVSALLHSSTMVVAGVFLLIRFHPLTENSPHIQTLTLCLGAITTLFAAICALTQNDIKKIVAFSTSSQLGLMMVTIGINQPHLALLHICTHAFFKALLFMCSGSIIHNLNNEQDIRKMGGLLKTMPLTSTSLTISSLALAGMPFLSGFYSKDLIIETANMSYTNTWALSITLIATSLTGAYSTRMILHTLTSKPHFPTPISINENNPTLLKPIKRLMLGSLFAGFLITNNIPPMSLPQVTTPPYLKLAALAATLLGLLVALDLNYLANKLKTKTPPPTFYFSIMLGFYPSIIHRMIPHLSLLMSQNLSLLLLDLTWLKKLMPKTISQHQTSASITISTQKGLIKLYFLSFLIPLLLILLMIS.

16 helical membrane passes run 4 to 24, 38 to 58, 89 to 109, 122 to 142, 171 to 191, 211 to 233, 241 to 261, 273 to 293, 301 to 320, 325 to 347, 366 to 386, 405 to 424, 457 to 477, 488 to 508, 524 to 544, and 582 to 602; these read FTTMTALTLTSLIPPITATLI, TAIASAFTISLIPTTMFICLG, FLPVALLITWSIMEFSLWYMA, LIFLITMIILVTANNLLQLFI, AILYNRIGDIGFILALAWFLL, LPLLGLLLAAAGKSAQLGLHPWL, TPVSALLHSSTMVVAGVFLLI, IQTLTLCLGAITTLFAAICAL, IVAFSTSSQLGLMMVTIGIN, ALLHICTHAFFKALLFMCSGSII, MPLTSTSLTISSLALAGMPFL, NTWALSITLIATSLTGAYST, LMLGSLFAGFLITNNIPPMSL, LAALAATLLGLLVALDLNYLA, IMLGFYPSIIHRMIPHLSLLM, and GLIKLYFLSFLIPLLLILLMI.

The protein belongs to the complex I subunit 5 family. As to quaternary structure, core subunit of respiratory chain NADH dehydrogenase (Complex I) which is composed of 45 different subunits.

The protein resides in the mitochondrion inner membrane. It catalyses the reaction a ubiquinone + NADH + 5 H(+)(in) = a ubiquinol + NAD(+) + 4 H(+)(out). Its function is as follows. Core subunit of the mitochondrial membrane respiratory chain NADH dehydrogenase (Complex I) which catalyzes electron transfer from NADH through the respiratory chain, using ubiquinone as an electron acceptor. Essential for the catalytic activity and assembly of complex I. The sequence is that of NADH-ubiquinone oxidoreductase chain 5 (MT-ND5) from Pongo abelii (Sumatran orangutan).